The sequence spans 350 residues: Leucine-rich repeat-containing protein 23 (350 aa).

Residues 1–54 (MEDETLEDGPEEEEEDEEEGTAEETNQDVTERDEEEEAEKDEEEDKEEEEEAEK) are compositionally biased toward acidic residues. The interval 1-64 (MEDETLEDGP…EEPPPHMPLS (64 aa)) is disordered. LRR repeat units follow at residues 107-128 (HLRYVDLSQNSLQDLSPLGALT), 129-150 (HLLSLRADHNQLVSVSGLGELP), 151-171 (YLQVASFAQNRIKSLQGFGHP), 172-193 (RLETLNLIGNELRDLEGLECSN), 196-216 (SLHTLELRSNQLLSTAGLNLP), 217-238 (SLRELYLGQNNISRLEGLEALV), 239-260 (NLTTLHLRDNQLESLDGFSEHL), and 262-283 (ALQYLNLRSNMVAKLQEVQKLY). The LRRCT domain occupies 296 to 334 (NPCEEEEGYRMETLIALPQLERLDKDFFEEEEKREAAET). The stretch at 314–344 (QLERLDKDFFEEEEKREAAETKKAREEEMAE) forms a coiled coil. Residues 325–350 (EEEKREAAETKKAREEEMAEPGEKGN) form a disordered region.

The protein localises to the cytoplasm. The protein resides in the cytoskeleton. Its subcellular location is the flagellum axoneme. The chain is Leucine-rich repeat-containing protein 23 (lrrc23) from Xenopus tropicalis (Western clawed frog).